The sequence spans 1551 residues: Dual oxidase 1 (1551 aa).

Positions 1 to 21 are cleaved as a signal peptide; that stretch reads MGFCLALAWTLLVGAWTPLGA. Over 22 to 596 the chain is Extracellular; the sequence is QNPISWEVQR…YFEGSGFGFG (575 aa). Positions 26–593 are peroxidase-like; mediates peroxidase activity; sequence SWEVQRFDGW…VRDYFEGSGF (568 aa). N-linked (GlcNAc...) asparagine glycosylation is present at N94. The interval 150–172 is disordered; it reads RWDPETGRSPSNPRDPANQVTGW. N342, N354, N461, and N534 each carry an N-linked (GlcNAc...) asparagine glycan. Residues 597-617 form a helical membrane-spanning segment; it reads VTIGTLCCFPLVSLLSAWIVA. The Cytoplasmic segment spans residues 618–1044; it reads RLRMRNFKRL…KRFIENYRRH (427 aa). EF-hand domains follow at residues 815–850, 851–886, and 895–930; these read PQDM…FMKG, SPEE…FIEI, and QLAE…HNSE. Ca(2+) contacts are provided by D828, D830, N832, Y834, E839, D864, D866, N868, and E875. The interval 956 to 1248 is interaction with TXNDC11; it reads YISQDMICPS…GSFALIQLPR (293 aa). Residues 1045 to 1065 form a helical membrane-spanning segment; sequence IGCVAVFYAIAGGLFLERAYY. At 1066-1080 the chain is on the extracellular side; it reads YAFAAHHTGITDTTR. A helical transmembrane segment spans residues 1081 to 1101; that stretch reads VGIILSRGTAASISFMFSYIL. The region spanning 1087 to 1269 is the Ferric oxidoreductase domain; that stretch reads RGTAASISFM…YGGDKLVSLS (183 aa). The Cytoplasmic segment spans residues 1102 to 1148; the sequence is LTMCRNLITFLRETFLNRYVPFDAAVDFHRLIASTAIVLTVLHSVGH. A helical transmembrane segment spans residues 1149–1171; it reads VVNVYLFSISPLSVLSCLFPGLF. The Extracellular portion of the chain corresponds to 1172–1188; it reads HDDGSELPQKYYWWFFQ. The chain crosses the membrane as a helical span at residues 1189 to 1209; it reads TVPGLTGVVLLLILAIMYVFA. Residues 1210-1226 lie on the Cytoplasmic side of the membrane; it reads SHHFRRRSFRGFWLTHH. Residues 1227–1247 traverse the membrane as a helical segment; it reads LYILLYVLLIIHGSFALIQLP. Residue R1248 is a topological domain, extracellular. Residues 1249-1269 traverse the membrane as a helical segment; the sequence is FHIFFLVPAIIYGGDKLVSLS. Residues 1270 to 1376 form the FAD-binding FR-type domain; the sequence is RKKVEISVVK…DGPFGEGHQE (107 aa). Over 1270 to 1551 the chain is Cytoplasmic; it reads RKKVEISVVK…THFSHHYENF (282 aa).

The protein in the N-terminal section; belongs to the peroxidase family. In terms of assembly, interacts with TXNDC11, TPO and CYBA. In terms of processing, N-glycosylated. In terms of tissue distribution, expressed in thyrocytes and tracheal surface epithelial cells (at protein level). Expressed in thyroid, trachea, bronchium, and to a lower extent, in placenta, testis, prostate, pancreas and heart.

It localises to the apical cell membrane. It carries out the reaction NADH + O2 + H(+) = H2O2 + NAD(+). The enzyme catalyses NADPH + O2 + H(+) = H2O2 + NADP(+). The protein operates within hormone biosynthesis; thyroid hormone biosynthesis. Its activity is regulated as follows. The NADPH oxidase activity is calcium-dependent. Peroxidase activity is inhibited by aminobenzohydrazide. Functionally, generates hydrogen peroxide which is required for the activity of thyroid peroxidase/TPO and lactoperoxidase/LPO. Plays a role in thyroid hormones synthesis and lactoperoxidase-mediated antimicrobial defense at the surface of mucosa. May have its own peroxidase activity through its N-terminal peroxidase-like domain. The sequence is that of Dual oxidase 1 (DUOX1) from Homo sapiens (Human).